Consider the following 350-residue polypeptide: Biotin synthase (350 aa).

One can recognise a Radical SAM core domain in the interval Arg-54–Ser-278. [4Fe-4S] cluster-binding residues include Cys-69, Cys-73, and Cys-76. 4 residues coordinate [2Fe-2S] cluster: Cys-113, Cys-144, Cys-204, and Arg-276.

This sequence belongs to the radical SAM superfamily. Biotin synthase family. As to quaternary structure, homodimer. The cofactor is [4Fe-4S] cluster. It depends on [2Fe-2S] cluster as a cofactor.

The enzyme catalyses (4R,5S)-dethiobiotin + (sulfur carrier)-SH + 2 reduced [2Fe-2S]-[ferredoxin] + 2 S-adenosyl-L-methionine = (sulfur carrier)-H + biotin + 2 5'-deoxyadenosine + 2 L-methionine + 2 oxidized [2Fe-2S]-[ferredoxin]. It functions in the pathway cofactor biosynthesis; biotin biosynthesis; biotin from 7,8-diaminononanoate: step 2/2. Functionally, catalyzes the conversion of dethiobiotin (DTB) to biotin by the insertion of a sulfur atom into dethiobiotin via a radical-based mechanism. The sequence is that of Biotin synthase from Neisseria meningitidis serogroup B (strain ATCC BAA-335 / MC58).